A 238-amino-acid polypeptide reads, in one-letter code: Ribonuclease PH (238 aa).

Residues R86 and 124–126 each bind phosphate; that span reads GTR.

This sequence belongs to the RNase PH family. In terms of assembly, homohexameric ring arranged as a trimer of dimers.

It carries out the reaction tRNA(n+1) + phosphate = tRNA(n) + a ribonucleoside 5'-diphosphate. Its function is as follows. Phosphorolytic 3'-5' exoribonuclease that plays an important role in tRNA 3'-end maturation. Removes nucleotide residues following the 3'-CCA terminus of tRNAs; can also add nucleotides to the ends of RNA molecules by using nucleoside diphosphates as substrates, but this may not be physiologically important. Probably plays a role in initiation of 16S rRNA degradation (leading to ribosome degradation) during starvation. The sequence is that of Ribonuclease PH from Shigella boydii serotype 18 (strain CDC 3083-94 / BS512).